A 311-amino-acid polypeptide reads, in one-letter code: MQENQQITKKEQYSLNKLQKRLRRNVGEAIADFNMIEEGDRIMVCLSGGKDSYTMLEILRNLQQSAPINFSLVAVNLDQKQPGFPEHVLPEYLEKLGVEYKIVEENTYGIVKEKIPEGKTTCSLCSRLRRGILYRTATELGTTKIALGHHRDDILQTLFLNMFYGGKMKGMPPKLMSDDGKHIVIRPLAYCREKDIQRFADAKAFPIIPCNLCGSQPNLQRQVIADMLRDWDKRYPGRIETMFSAMQNVVPSHLCDTNLFDFKGITHGSEVVNGGDLAFDREEIPLQPAGWQPEEDENQLDELRLNVVEVK.

Positions 47-52 (SGGKDS) match the PP-loop motif motif. Positions 122, 125, and 213 each coordinate [4Fe-4S] cluster.

It belongs to the TtcA family. Homodimer. The cofactor is Mg(2+). It depends on [4Fe-4S] cluster as a cofactor.

The protein localises to the cytoplasm. The catalysed reaction is cytidine(32) in tRNA + S-sulfanyl-L-cysteinyl-[cysteine desulfurase] + AH2 + ATP = 2-thiocytidine(32) in tRNA + L-cysteinyl-[cysteine desulfurase] + A + AMP + diphosphate + H(+). The protein operates within tRNA modification. Its function is as follows. Catalyzes the ATP-dependent 2-thiolation of cytidine in position 32 of tRNA, to form 2-thiocytidine (s(2)C32). The sulfur atoms are provided by the cysteine/cysteine desulfurase (IscS) system. The chain is tRNA-cytidine(32) 2-sulfurtransferase from Shigella boydii serotype 4 (strain Sb227).